Consider the following 1025-residue polypeptide: Exportin-T (1025 aa).

It belongs to the exportin family.

It localises to the nucleus. It is found in the cytoplasm. TRNA nucleus export receptor which facilitates tRNA translocation across the nuclear pore complex. Involved in pre-tRNA splicing, probably by affecting the interaction of pre-tRNA with splicing endonuclease. This chain is Exportin-T (LOS1), found in Candida albicans (strain SC5314 / ATCC MYA-2876) (Yeast).